Consider the following 30-residue polypeptide: Urease subunit alpha (30 aa).

The protein belongs to the metallo-dependent hydrolases superfamily. Urease alpha subunit family. In terms of assembly, heterotrimer of UreA (gamma), UreB (beta) and UreC (alpha) subunits. Three heterotrimers associate to form the active enzyme. Ni cation serves as cofactor.

The protein localises to the cytoplasm. It carries out the reaction urea + 2 H2O + H(+) = hydrogencarbonate + 2 NH4(+). It participates in nitrogen metabolism; urea degradation; CO(2) and NH(3) from urea (urease route): step 1/1. The sequence is that of Urease subunit alpha (ureC) from Escherichia coli.